The sequence spans 151 residues: Neuroglobin (151 aa).

Residues 1 to 149 (MERPEHELIR…VVQAMSRGWN (149 aa)) enclose the Globin domain. Residues H64 and H96 each coordinate heme b.

This sequence belongs to the globin family. As to quaternary structure, monomer. Homodimer and homotetramer; disulfide-linked. Mainly monomeric but also detected as part of homodimers and homotetramers. Interacts with 14-3-3 proteins; regulates the phosphorylation of NGB. Could interact (ferrous form) with G-alpha(i) proteins (GTP-bound form). In terms of processing, phosphorylated during hypoxia by ERK1/ERK2. Phosphorylation regulates the heme pocket hexacoordination preventing the association of His-64 with the heme metal center. Thereby, promotes the access of dioxygen and nitrite to the heme and stimulates the nitrite reductase activity. Phosphorylation during hypoxia is stabilized by 14-3-3 proteins.

Its subcellular location is the cytoplasm. It localises to the cytosol. The protein resides in the mitochondrion matrix. It catalyses the reaction Fe(III)-heme b-[protein] + nitric oxide + H2O = Fe(II)-heme b-[protein] + nitrite + 2 H(+). Functionally, monomeric globin with a bis-histidyl six-coordinate heme-iron atom through which it can bind dioxygen, carbon monoxide and nitric oxide. Could help transport oxygen and increase its availability to the metabolically active neuronal tissues, though its low quantity in tissues as well as its high affinity for dioxygen, which may limit its oxygen-releasing ability, argue against it. The ferrous/deoxygenated form exhibits a nitrite reductase activity and it could produce nitric oxide which in turn inhibits cellular respiration in response to hypoxia. In its ferrous/deoxygenated state, it may also exhibit GDI (Guanine nucleotide Dissociation Inhibitor) activity toward heterotrimeric G-alpha proteins, thereby regulating signal transduction to facilitate neuroprotective responses in the wake of hypoxia and associated oxidative stress. This is Neuroglobin from Sus scrofa (Pig).